A 112-amino-acid chain; its full sequence is uncharacterized protein (112 aa).

This is an uncharacterized protein from Gallus gallus (Chicken).